The chain runs to 347 residues: Methylthioribose-1-phosphate isomerase (347 aa).

Residues 47 to 49 (RGA), R90, and Q199 contribute to the substrate site. The active-site Proton donor is the D240. 250-251 (NK) contacts substrate.

The protein belongs to the eIF-2B alpha/beta/delta subunits family. MtnA subfamily.

It carries out the reaction 5-(methylsulfanyl)-alpha-D-ribose 1-phosphate = 5-(methylsulfanyl)-D-ribulose 1-phosphate. The protein operates within amino-acid biosynthesis; L-methionine biosynthesis via salvage pathway; L-methionine from S-methyl-5-thio-alpha-D-ribose 1-phosphate: step 1/6. In terms of biological role, catalyzes the interconversion of methylthioribose-1-phosphate (MTR-1-P) into methylthioribulose-1-phosphate (MTRu-1-P). In Natranaerobius thermophilus (strain ATCC BAA-1301 / DSM 18059 / JW/NM-WN-LF), this protein is Methylthioribose-1-phosphate isomerase.